The chain runs to 336 residues: Glyceraldehyde-3-phosphate dehydrogenase (336 aa).

NAD(+)-binding positions include 12 to 13, aspartate 34, and serine 120; that span reads RI. D-glyceraldehyde 3-phosphate is bound by residues 150-152, threonine 181, arginine 198, 211-212, and arginine 234; these read SCT and TG. Cysteine 151 acts as the Nucleophile in catalysis. Asparagine 316 lines the NAD(+) pocket.

It belongs to the glyceraldehyde-3-phosphate dehydrogenase family. In terms of assembly, homotetramer.

It is found in the cytoplasm. The catalysed reaction is D-glyceraldehyde 3-phosphate + phosphate + NAD(+) = (2R)-3-phospho-glyceroyl phosphate + NADH + H(+). It functions in the pathway carbohydrate degradation; glycolysis; pyruvate from D-glyceraldehyde 3-phosphate: step 1/5. Functionally, catalyzes the oxidative phosphorylation of glyceraldehyde 3-phosphate (G3P) to 1,3-bisphosphoglycerate (BPG) using the cofactor NAD. The first reaction step involves the formation of a hemiacetal intermediate between G3P and a cysteine residue, and this hemiacetal intermediate is then oxidized to a thioester, with concomitant reduction of NAD to NADH. The reduced NADH is then exchanged with the second NAD, and the thioester is attacked by a nucleophilic inorganic phosphate to produce BPG. The protein is Glyceraldehyde-3-phosphate dehydrogenase (gapA) of Staphylococcus aureus.